The chain runs to 141 residues: Flagellar assembly factor FliW (141 aa).

The protein belongs to the FliW family. In terms of assembly, interacts with translational regulator CsrA and flagellin(s).

Its subcellular location is the cytoplasm. Its function is as follows. Acts as an anti-CsrA protein, binds CsrA and prevents it from repressing translation of its target genes, one of which is flagellin. Binds to flagellin and participates in the assembly of the flagellum. The polypeptide is Flagellar assembly factor FliW (Clostridium beijerinckii (strain ATCC 51743 / NCIMB 8052) (Clostridium acetobutylicum)).